We begin with the raw amino-acid sequence, 484 residues long: MTRAIMLQGTGSDVGKSVLVAGLCRLAANRGLKVRPFKPQNMSNNAAVSDDGGEIGRAQWLQSLAARVPSSVHMNPVLLKPQSDVGSQVILQGKVAGQAKGREYQALKPKLLGAVMESFGRVSAGADLVVVEGAGSPAEINLRAGDIANMGFATHANVPVVLVGDIDRGGVIASLVGTHAILPEEDRRMVAGYLINKFRGDVSLFDDGIAAVGRFTGWPCFGVVPWLKSAARLPAEDSVVLEKLARGSGKALKVAVPVLSRIANFDDLDPLAAEPEVELVFVRPGMSLPQDAGLVVIPGSKSTISDLKNFRAQGWDRDLERHVRRGGRVIGICGGYQILGTRVADPLGIEGSEREIAGLGLLSVETEMAPEKTVRNSRAWSLEHDVGLEGYEIHLGKTTGADCERAPVTIDGRPDGAMSADGRVMGTYLHGLFGSDAYRAALLKSLGIEGGGANYRQSVDSALDEIAAELEGVLDGAWLNRLLG.

The GATase cobBQ-type domain occupies Ala-251–Tyr-438. Cys-333 functions as the Nucleophile in the catalytic mechanism. Residue His-430 is part of the active site.

Belongs to the CobB/CobQ family. CobQ subfamily.

It participates in cofactor biosynthesis; adenosylcobalamin biosynthesis. Its function is as follows. Catalyzes amidations at positions B, D, E, and G on adenosylcobyrinic A,C-diamide. NH(2) groups are provided by glutamine, and one molecule of ATP is hydrogenolyzed for each amidation. The polypeptide is Cobyric acid synthase (Sinorhizobium fredii (strain NBRC 101917 / NGR234)).